The sequence spans 568 residues: Kelch-like protein 12 (568 aa).

Residues 33 to 100 (CDVTLRVEQK…VYTETVHVTV (68 aa)) form the BTB domain. The BACK domain occupies 135-236 (CLGIRDFAET…LTPRYITDVI (102 aa)). Kelch repeat units lie at residues 282 to 329 (VLLV…SLHD), 331 to 379 (IYVI…TLGD), 380 to 426 (MIYV…VASG), 427 to 473 (IIYC…LLND), 475 to 520 (IYVV…VLRG), and 522 to 567 (LYAI…VLRE). The interaction with DVL3 stretch occupies residues 405–568 (QWSMLGDMQT…DAGVCVLREK (164 aa)).

As to quaternary structure, component of the BCR(KLHL12) E3 ubiquitin ligase complex, at least composed of CUL3 and KLHL12 and RBX1. This complex interacts with DVL3 upon activation of the Wnt signaling pathway by WNT3A. Interacts with DRD4, KLHL2 and SEC31A. Interacts with PEF1 and PDCD6/ALG-2; interaction takes place in response to cytosolic calcium increase and leads to bridge together the BCR(KLHL12) complex and SEC31 (SEC31A or SEC31B). Ubiquitinated by the SCF(FBXL17) complex, leading to its degradation by the proteasome: ubiquitination by the SCF(FBXL17) complex takes place when aberrant BTB domain dimers are formed.

Its subcellular location is the cytoplasmic vesicle. It localises to the COPII-coated vesicle. It functions in the pathway protein modification; protein ubiquitination. In terms of biological role, substrate-specific adapter of a BCR (BTB-CUL3-RBX1) E3 ubiquitin ligase complex that acts as a negative regulator of Wnt signaling pathway and ER-Golgi transport. The BCR(KLHL12) complex is involved in ER-Golgi transport by regulating the size of COPII coats, thereby playing a key role in collagen export, which is required for embryonic stem (ES) cells division: BCR(KLHL12) acts by mediating monoubiquitination of SEC31 (SEC31A or SEC31B). The BCR(KLHL12) complex is also involved in neural crest specification: in response to cytosolic calcium increase, interacts with the heterodimer formed with PEF1 and PDCD6/ALG-2, leading to bridge together the BCR(KLHL12) complex and SEC31 (SEC31A or SEC31B), promoting monoubiquitination of SEC31 and subsequent collagen export. As part of the BCR(KLHL12) complex, also acts as a negative regulator of the Wnt signaling pathway by mediating ubiquitination and subsequent proteolysis of DVL3. The BCR(KLHL12) complex also mediates polyubiquitination of DRD4 and PEF1, without leading to degradation of these proteins. The polypeptide is Kelch-like protein 12 (Klhl12) (Rattus norvegicus (Rat)).